Reading from the N-terminus, the 27-residue chain is Potassium channel toxin alpha-KTx 32.1 (27 aa).

2 cysteine pairs are disulfide-bonded: Cys5–Cys18 and Cys12–Cys25.

Expressed by the venom gland.

The protein localises to the secreted. Its function is as follows. Blocker of voltage-gated potassium channels. Inhibits voltage-gated potassium channels Kv1.2/KCNA2 (Kd=0.96 nM) and Kv1.3/KCNA3 (Kd=1.3 nM). Does not inhibit Kv1.1/KCNA1, Kv1.5/KCNA5, Kv11.1/KCNH2/ERG1, KCa1.1/KCNMA1, KCa3.1/KCNN4, NaV1.5/SCN5A, NaV1.4/SCN4A or HV1/HVCN1. Strongly inhibits the expression of the activation markers interleukin-2 receptor and CD40 ligand/CD40LG in anti-CD3-activated CD4(+) TEM lymphocytes. The protein is Potassium channel toxin alpha-KTx 32.1 of Centruroides margaritatus (Central American bark Scorpion).